Consider the following 746-residue polypeptide: Double-stranded RNA-specific editase B2 (746 aa).

Disordered stretches follow at residues 1–36 (MASVLGSGRGSGGLSSQLKCKSKRRRRRRSKRKDKV) and 50–105 (SPGT…PLEE). A compositionally biased stretch (basic residues) spans 20–34 (CKSKRRRRRRSKRKD). Positions 23–35 (KRRRRRRSKRKDK) are R-domain (ssRNA-binding). DRBM domains follow at residues 126-192 (TPKN…SFVQ) and 284-348 (NPVV…ALFD). The 328-residue stretch at 415 to 742 (VLSSGTKCIS…VRKPPEQDQF (328 aa)) folds into the A to I editase domain. Zn(2+) is bound at residue His439. Residue Glu441 is the Proton donor of the active site. Positions 497 and 562 each coordinate Zn(2+).

As to expression, brain specific.

The protein resides in the nucleus. Functionally, lacks editing activity. It prevents the binding of other ADAR enzymes to targets in vitro, and decreases the efficiency of these enzymes. Capable of binding to dsRNA but also to ssRNA. This is Double-stranded RNA-specific editase B2 (Adarb2) from Rattus norvegicus (Rat).